The following is a 456-amino-acid chain: Glutamyl-tRNA(Gln) amidotransferase subunit A (456 aa).

Active-site charge relay system residues include Lys74 and Ser149. Ser173 serves as the catalytic Acyl-ester intermediate.

The protein belongs to the amidase family. GatA subfamily. As to quaternary structure, heterotrimer of A, B and C subunits.

It carries out the reaction L-glutamyl-tRNA(Gln) + L-glutamine + ATP + H2O = L-glutaminyl-tRNA(Gln) + L-glutamate + ADP + phosphate + H(+). Its function is as follows. Allows the formation of correctly charged Gln-tRNA(Gln) through the transamidation of misacylated Glu-tRNA(Gln) in organisms which lack glutaminyl-tRNA synthetase. The reaction takes place in the presence of glutamine and ATP through an activated gamma-phospho-Glu-tRNA(Gln). In Methanobrevibacter smithii (strain ATCC 35061 / DSM 861 / OCM 144 / PS), this protein is Glutamyl-tRNA(Gln) amidotransferase subunit A.